The following is a 436-amino-acid chain: MSSRKSKNNSLIHTECLSQVQRILRERFCHQSPHSNLFGVQVQYKHLSELLKRTALHGESNSVLIIGPRGSGKTMLINHALKELMEIEEVSENVLQVHLNGLLQINDKIALKEITRQLNLENVVGDKVFGSFAENLSFLLEALKKGDRTSSCPVVFILDEFDLFAHHKNQTLLYNLFDISQSAQTPVAVIGLTCRLDILELLEKRVKSRFSHRQIHLMNSFGFPQYVKIFKEQLSLPAEFPDKVFAEKWNENVQYLSEDRSVQEVLQKHFNISKNLRSLHMLLMLALNRVTASHPFMTAVDLIEASQLCSMDSKANIVHGLSVLEICLIIAMKHLNDIYEEEPFNFQMVYNEFQKFVQRKAHSVYNFEKPVVMKAFEHLQQLELIKPMERTSGNSQREYQLMKLLLDNTQIMNALQKYPNCPTDVRQWATSSLSWL.

K7 carries the post-translational modification N6-methyllysine. Position 67–74 (67–74) interacts with ATP; that stretch reads GPRGSGKT.

The protein belongs to the ORC4 family. As to quaternary structure, component of ORC, a complex composed of at least 6 subunits: ORC1, ORC2, ORC3, ORC4, ORC5 and ORC6. ORC is regulated in a cell-cycle dependent manner. It is sequentially assembled at the exit from anaphase of mitosis and disassembled as cells enter S phase. Interacts with DBF4. Interacts with POLQ.

It localises to the nucleus. In terms of biological role, component of the origin recognition complex (ORC) that binds origins of replication. DNA-binding is ATP-dependent. The specific DNA sequences that define origins of replication have not been identified yet. ORC is required to assemble the pre-replication complex necessary to initiate DNA replication. Binds histone H3 and H4 trimethylation marks H3K9me3, H3K27me3 and H4K20me3. The polypeptide is Origin recognition complex subunit 4 (ORC4) (Pongo abelii (Sumatran orangutan)).